The chain runs to 694 residues: Elongation factor G (694 aa).

The tr-type G domain maps to 9 to 288 (DAIRNIGIMA…VIVKWLPSPL (280 aa)). GTP is bound by residues 18 to 25 (AHIDAGKT), 82 to 86 (DTPGH), and 136 to 139 (NKMD).

It belongs to the TRAFAC class translation factor GTPase superfamily. Classic translation factor GTPase family. EF-G/EF-2 subfamily.

It is found in the cytoplasm. Functionally, catalyzes the GTP-dependent ribosomal translocation step during translation elongation. During this step, the ribosome changes from the pre-translocational (PRE) to the post-translocational (POST) state as the newly formed A-site-bound peptidyl-tRNA and P-site-bound deacylated tRNA move to the P and E sites, respectively. Catalyzes the coordinated movement of the two tRNA molecules, the mRNA and conformational changes in the ribosome. This is Elongation factor G from Chlamydia trachomatis serovar L2b (strain UCH-1/proctitis).